The sequence spans 233 residues: uncharacterized protein (233 aa).

The N-terminal stretch at 1 to 23 is a signal peptide; sequence MEIKYFLVLLVGFLLVLPSIVNP. The tract at residues 42–217 is disordered; sequence LDVNNPHNPN…HHHHQEASEC (176 aa). Low complexity predominate over residues 45-64; sequence NNPHNPNNNPHNPHNPNNNP. The segment covering 65-211 has biased composition (basic residues); that stretch reads HHPHHLHHHH…HPHPHHHHHH (147 aa).

It is found in the secreted. This is an uncharacterized protein from Dictyostelium discoideum (Social amoeba).